The chain runs to 397 residues: Serpin B10 (397 aa).

Positions 74–77 (KKRK) match the Nuclear localization signal motif.

It belongs to the serpin family. Ov-serpin subfamily.

Its subcellular location is the nucleus. The protein localises to the cytoplasm. In terms of biological role, protease inhibitor that may play a role in the regulation of protease activities during hematopoiesis and apoptosis induced by TNF. May regulate protease activities in the cytoplasm and in the nucleus. This is Serpin B10 (Serpinb10) from Mus musculus (Mouse).